The following is a 264-amino-acid chain: Thiazole synthase (264 aa).

Residue Lys98 is the Schiff-base intermediate with DXP of the active site. 1-deoxy-D-xylulose 5-phosphate-binding positions include Gly159, 185–186 (AG), and 207–208 (AT).

Belongs to the ThiG family. In terms of assembly, homotetramer. Forms heterodimers with either ThiH or ThiS.

It localises to the cytoplasm. It catalyses the reaction [ThiS sulfur-carrier protein]-C-terminal-Gly-aminoethanethioate + 2-iminoacetate + 1-deoxy-D-xylulose 5-phosphate = [ThiS sulfur-carrier protein]-C-terminal Gly-Gly + 2-[(2R,5Z)-2-carboxy-4-methylthiazol-5(2H)-ylidene]ethyl phosphate + 2 H2O + H(+). It participates in cofactor biosynthesis; thiamine diphosphate biosynthesis. In terms of biological role, catalyzes the rearrangement of 1-deoxy-D-xylulose 5-phosphate (DXP) to produce the thiazole phosphate moiety of thiamine. Sulfur is provided by the thiocarboxylate moiety of the carrier protein ThiS. In vitro, sulfur can be provided by H(2)S. This is Thiazole synthase from Mycobacterium marinum (strain ATCC BAA-535 / M).